The following is a 278-amino-acid chain: Nucleotide-binding protein LHK_02029 (278 aa).

8-15 is an ATP binding site; the sequence is GLAGSGKS. 57–60 lines the GTP pocket; the sequence is DTRD.

This sequence belongs to the RapZ-like family.

Its function is as follows. Displays ATPase and GTPase activities. The protein is Nucleotide-binding protein LHK_02029 of Laribacter hongkongensis (strain HLHK9).